A 482-amino-acid polypeptide reads, in one-letter code: ATP synthase subunit beta, chloroplastic (482 aa).

162–169 contacts ATP; it reads GGAGVGKT.

Belongs to the ATPase alpha/beta chains family. As to quaternary structure, F-type ATPases have 2 components, CF(1) - the catalytic core - and CF(0) - the membrane proton channel. CF(1) has five subunits: alpha(3), beta(3), gamma(1), delta(1), epsilon(1). CF(0) has four main subunits: a(1), b(1), b'(1) and c(9-12).

Its subcellular location is the plastid. It localises to the chloroplast thylakoid membrane. It carries out the reaction ATP + H2O + 4 H(+)(in) = ADP + phosphate + 5 H(+)(out). Functionally, produces ATP from ADP in the presence of a proton gradient across the membrane. The catalytic sites are hosted primarily by the beta subunits. The chain is ATP synthase subunit beta, chloroplastic from Pleurastrum terricola (Filamentous green alga).